A 489-amino-acid polypeptide reads, in one-letter code: MVPVIALVGRPNVGKSTMFNRLTRTRDAIVGDLSGLTRDRQYGEAKWQGRSYILIDTGGISGDEHGMDEKMAEQSLLAIEEADVVLFLVDARAGYTAADQMIGEHLRKRNKRSYVVANKIDNIDENLARAEFSPMGLGDAIPVAGAHGRGISQMLEIALREFPKDEDELEEGEVEEVAEGQEAKRIPGPSEKDGIKIAIIGRPNVGKSTLVNRMLGEDRVIVYDEPGTTRDSIYIPFERNEEKYTLIDTAGVRKRGKIHEEVEKFSVVKTLQAIKDANVVIFVMDAREGVVDHDLNLLGFALEAGRALVIALNKWDGMTPGERDFVKIELERRLFFVDFADIHFISALHGTGVGNLYQSVQNSFKSAVTRWPTSRLTQILEDAVSEHAPPMVGSRRIKLRYAHLGGANPPLIVIHGNQVEKVPKSYVRYLENTYRRVLKLVGTPIRIEFKGGENPYEGNKNTLTDRQVNKKRRMMSHHKKADKKRRDKR.

EngA-type G domains are found at residues 3 to 166 (PVIA…PKDE) and 195 to 368 (IKIA…KSAV). GTP contacts are provided by residues 9–16 (GRPNVGKS), 56–60 (DTGGI), 118–121 (NKID), 201–208 (GRPNVGKS), 248–252 (DTAGV), and 313–316 (NKWD). The KH-like domain occupies 369–453 (TRWPTSRLTQ…PIRIEFKGGE (85 aa)). The tract at residues 451-489 (GGENPYEGNKNTLTDRQVNKKRRMMSHHKKADKKRRDKR) is disordered. The segment covering 469-489 (NKKRRMMSHHKKADKKRRDKR) has biased composition (basic residues).

This sequence belongs to the TRAFAC class TrmE-Era-EngA-EngB-Septin-like GTPase superfamily. EngA (Der) GTPase family. Associates with the 50S ribosomal subunit.

Its function is as follows. GTPase that plays an essential role in the late steps of ribosome biogenesis. This is GTPase Der from Pseudomonas syringae pv. tomato (strain ATCC BAA-871 / DC3000).